Reading from the N-terminus, the 858-residue chain is Piwi-like protein 1 (858 aa).

Over residues 1–13 the composition is skewed to basic residues; the sequence is MTGRARARSRGRG. The segment at 1–56 is disordered; the sequence is MTGRARARSRGRGRGQEPAAPGAQPPVSQEAAKPVVSTPSEGQLVGRGRQKPAPGA. Residues 16 to 26 show a composition bias toward low complexity; it reads QEPAAPGAQPP. Residues 276-388 enclose the PAZ domain; that stretch reads TVLDFMYSLR…LVPEFCYLTG (113 aa). The tract at residues 314 to 316 is required for binding 2'-O-methylated 3'-end of piRNAs; sequence TYR. The MID region stretch occupies residues 476–612; that stretch reads SKEMRGLPLI…LQMNCKMGGE (137 aa). One can recognise a Piwi domain in the interval 552 to 844; it reads MVVVILPTNR…LAFLVGQSIH (293 aa). Residues D629, E667, D699, and H833 contribute to the active site.

This sequence belongs to the argonaute family. Piwi subfamily. The cofactor is Mg(2+). Post-translationally, methylated on arginine residues; required for the interaction with Tudor domain-containing protein and subsequent localization to the meiotic nuage, also named P granule. As to expression, expressed exclusively in the adult gonads; expression in the ovary weaker than in the testis (at protein level). During neurogenesis and organogenesis, expression is detected in CNS (midbrain and eye) and fin buds. Starting from 24 hours post-fertilization, expression is found in the genital ridge.

It is found in the cytoplasm. Plays a central role during gametogenesis by repressing transposable elements and preventing their mobilization, which is essential for the germline integrity. Acts via the piRNA metabolic process, which mediates the repression of transposable elements during meiosis by forming complexes composed of piRNAs and Piwi proteins and governs the methylation and subsequent repression of transposons. Directly binds methylated piRNAs, a class of 24 to 30 nucleotide RNAs that are generated by a Dicer-independent mechanism and are primarily derived from transposons and other repeated sequence elements. Has a strong preference for piRNAs with a uridine nucleotide at their 5'-end (g1U preference, also named 1U-bias) and binds piRNAs in an opposite direction compared to piwil2/zili. Participates in a piRNA amplification loop with piwil2/zili. Not involved in the piRNA amplification loop, also named ping-pong amplification cycle. Acts as an endoribonuclease that cleaves transposon messenger RNAs. This is Piwi-like protein 1 (piwil1) from Danio rerio (Zebrafish).